Here is a 406-residue protein sequence, read N- to C-terminus: Elongation factor Tu, chloroplastic (406 aa).

One can recognise a tr-type G domain in the interval 8–210 (KTHINIATIG…LLDSYIPKPK (203 aa)). Residues 17–24 (GHFNHGKT), 77–81 (DCPGH), and 132–135 (NKED) contribute to the GTP site. T24 lines the Mg(2+) pocket.

This sequence belongs to the TRAFAC class translation factor GTPase superfamily. Classic translation factor GTPase family. EF-Tu/EF-1A subfamily. Monomer.

The protein resides in the plastid. The protein localises to the chloroplast. It carries out the reaction GTP + H2O = GDP + phosphate + H(+). Functionally, GTP hydrolase that promotes the GTP-dependent binding of aminoacyl-tRNA to the A-site of ribosomes during protein biosynthesis. In Chaetosphaeridium globosum (Charophycean green alga), this protein is Elongation factor Tu, chloroplastic (tufA).